The primary structure comprises 441 residues: ATP-dependent protease ATPase subunit HslU (441 aa).

ATP is bound by residues Val18, 60–65, Asp253, Glu319, and Arg391; that span reads GVGKTE.

This sequence belongs to the ClpX chaperone family. HslU subfamily. As to quaternary structure, a double ring-shaped homohexamer of HslV is capped on each side by a ring-shaped HslU homohexamer. The assembly of the HslU/HslV complex is dependent on binding of ATP.

The protein resides in the cytoplasm. In terms of biological role, ATPase subunit of a proteasome-like degradation complex; this subunit has chaperone activity. The binding of ATP and its subsequent hydrolysis by HslU are essential for unfolding of protein substrates subsequently hydrolyzed by HslV. HslU recognizes the N-terminal part of its protein substrates and unfolds these before they are guided to HslV for hydrolysis. In Nitratidesulfovibrio vulgaris (strain DP4) (Desulfovibrio vulgaris), this protein is ATP-dependent protease ATPase subunit HslU.